The primary structure comprises 154 residues: Ribosome maturation factor RimP (154 aa).

Belongs to the RimP family.

It localises to the cytoplasm. Functionally, required for maturation of 30S ribosomal subunits. This chain is Ribosome maturation factor RimP, found in Thioalkalivibrio sulfidiphilus (strain HL-EbGR7).